A 299-amino-acid polypeptide reads, in one-letter code: Tyrosine recombinase XerC (299 aa).

In terms of domain architecture, Core-binding (CB) spans 1–85; it reads MERQLDAYCE…AVRGLYHYLN (85 aa). The Tyr recombinase domain maps to 106–285; it reads RLPKTLDTDR…DFQHLAAVYD (180 aa). Active-site residues include Arg-146, Lys-170, His-237, Arg-240, and His-263. Residue Tyr-272 is the O-(3'-phospho-DNA)-tyrosine intermediate of the active site.

Belongs to the 'phage' integrase family. XerC subfamily. In terms of assembly, forms a cyclic heterotetrameric complex composed of two molecules of XerC and two molecules of XerD.

The protein localises to the cytoplasm. Functionally, site-specific tyrosine recombinase, which acts by catalyzing the cutting and rejoining of the recombining DNA molecules. The XerC-XerD complex is essential to convert dimers of the bacterial chromosome into monomers to permit their segregation at cell division. It also contributes to the segregational stability of plasmids. The sequence is that of Tyrosine recombinase XerC from Pseudomonas fluorescens (strain Pf0-1).